A 347-amino-acid polypeptide reads, in one-letter code: Spermidine/putrescine import ATP-binding protein PotA (347 aa).

One can recognise an ABC transporter domain in the interval 6-238 (LEIKNLSHYY…PKTKFVADFI (233 aa)). An ATP-binding site is contributed by 40 to 47 (GPSGCGKT).

It belongs to the ABC transporter superfamily. Spermidine/putrescine importer (TC 3.A.1.11.1) family. In terms of assembly, the complex is composed of two ATP-binding proteins (PotA), two transmembrane proteins (PotB and PotC) and a solute-binding protein (PotD).

Its subcellular location is the cell inner membrane. It carries out the reaction ATP + H2O + polyamine-[polyamine-binding protein]Side 1 = ADP + phosphate + polyamineSide 2 + [polyamine-binding protein]Side 1.. Functionally, part of the ABC transporter complex PotABCD involved in spermidine/putrescine import. Responsible for energy coupling to the transport system. This chain is Spermidine/putrescine import ATP-binding protein PotA, found in Borreliella afzelii (strain PKo) (Borrelia afzelii).